A 544-amino-acid chain; its full sequence is Chaperonin GroEL 2 (544 aa).

ATP is bound by residues 29 to 32 (TLGP), 86 to 90 (DGTTT), Gly413, 479 to 481 (NAA), and Asp495.

This sequence belongs to the chaperonin (HSP60) family. In terms of assembly, forms a cylinder of 14 subunits composed of two heptameric rings stacked back-to-back. Interacts with the co-chaperonin GroES.

It localises to the cytoplasm. The catalysed reaction is ATP + H2O + a folded polypeptide = ADP + phosphate + an unfolded polypeptide.. In terms of biological role, together with its co-chaperonin GroES, plays an essential role in assisting protein folding. The GroEL-GroES system forms a nano-cage that allows encapsulation of the non-native substrate proteins and provides a physical environment optimized to promote and accelerate protein folding. The polypeptide is Chaperonin GroEL 2 (Prochlorococcus marinus (strain MIT 9515)).